The primary structure comprises 275 residues: Autophagy-related protein 5 (275 aa).

A Glycyl lysine isopeptide (Lys-Gly) (interchain with G-Cter in lgg-3/ATG12) cross-link involves residue Lys-129. Low complexity predominate over residues Leu-221–Ser-231. Residues Leu-221–Ser-241 form a disordered region.

Belongs to the ATG5 family. Most likely a component of a complex at least containing atg-5, lgg-3/ATG12, atg-16.1 and/or atg-16.2. Interacts with lgg-3/ATG12. Interacts with atg-16.1 (via N-terminus) and atg-16.2 (via N-terminus). Post-translationally, conjugated to lgg-3/ATG12; which is essential for autophagy.

It is found in the preautophagosomal structure membrane. In terms of biological role, involved in autophagic vesicle formation. Conjugation with lgg-3/ATG12, through a ubiquitin-like conjugating system involving atg-7 as an E1-like activating enzyme and atg-10 as an E2-like conjugating enzyme, is essential for its function. Most likely a component of an atg-5-lgg-3-atg-16 complex that promotes autophagosome formation by associating with lgg-2, but not lgg-1, at the preautophagosomal membrane. Probably, as part of an atg-5-lgg-3-atg-16 complex, required for lgg-1 lipidation; the complex acts as an E3-like enzyme promoting atg-3-mediated lgg-1 lipidation. Furthermore, association with atg-16.2 is required for the nucleation of lgg-1 positive autophagic vesicles. The chain is Autophagy-related protein 5 from Caenorhabditis elegans.